The chain runs to 150 residues: Small ribosomal subunit protein uS11 (150 aa).

The segment at 126 to 150 (GRIEDVTPTPSDSTRRKGGRRGRRL) is disordered. A compositionally biased stretch (basic residues) spans 141-150 (RKGGRRGRRL).

This sequence belongs to the universal ribosomal protein uS11 family. As to quaternary structure, component of the small ribosomal subunit (SSU). Mature N.crassa ribosomes consist of a small (40S) and a large (60S) subunit. The 40S small subunit contains 1 molecule of ribosomal RNA (18S rRNA) and at least 32 different proteins. The large 60S subunit contains 3 rRNA molecules (26S, 5.8S and 5S rRNA) and at least 42 different proteins.

The protein localises to the cytoplasm. Functionally, component of the ribosome, a large ribonucleoprotein complex responsible for the synthesis of proteins in the cell. The small ribosomal subunit (SSU) binds messenger RNAs (mRNAs) and translates the encoded message by selecting cognate aminoacyl-transfer RNA (tRNA) molecules. The large subunit (LSU) contains the ribosomal catalytic site termed the peptidyl transferase center (PTC), which catalyzes the formation of peptide bonds, thereby polymerizing the amino acids delivered by tRNAs into a polypeptide chain. The nascent polypeptides leave the ribosome through a tunnel in the LSU and interact with protein factors that function in enzymatic processing, targeting, and the membrane insertion of nascent chains at the exit of the ribosomal tunnel. uS11 is involved in nucleolar processing of pre-18S ribosomal RNA and ribosome assembly. This Neurospora crassa (strain ATCC 24698 / 74-OR23-1A / CBS 708.71 / DSM 1257 / FGSC 987) protein is Small ribosomal subunit protein uS11 (rps-14).